A 211-amino-acid chain; its full sequence is Dual specificity protein phosphatase 26 (211 aa).

A Tyrosine-protein phosphatase domain is found at 60–207; that stretch reads NHADEVWPGL…LLALDRRLRQ (148 aa). The active-site Phosphocysteine intermediate is the Cys152.

Belongs to the protein-tyrosine phosphatase family. Non-receptor class dual specificity subfamily. Interacts with HSF4. As to expression, brain and skeletal muscle. In the brain it is expressed ubiquitously except in the hippocampus.

The protein localises to the cytoplasm. Its subcellular location is the nucleus. It localises to the golgi apparatus. It carries out the reaction O-phospho-L-tyrosyl-[protein] + H2O = L-tyrosyl-[protein] + phosphate. The catalysed reaction is O-phospho-L-seryl-[protein] + H2O = L-seryl-[protein] + phosphate. It catalyses the reaction O-phospho-L-threonyl-[protein] + H2O = L-threonyl-[protein] + phosphate. Functionally, inactivates MAPK1 and MAPK3 which leads to dephosphorylation of heat shock factor protein 4 and a reduction in its DNA-binding activity. This is Dual specificity protein phosphatase 26 (Dusp26) from Mus musculus (Mouse).